The sequence spans 228 residues: Probable septum site-determining protein MinC (228 aa).

This sequence belongs to the MinC family. In terms of assembly, interacts with MinD and FtsZ.

Cell division inhibitor that blocks the formation of polar Z ring septums. Rapidly oscillates between the poles of the cell to destabilize FtsZ filaments that have formed before they mature into polar Z rings. Prevents FtsZ polymerization. In Yersinia enterocolitica serotype O:8 / biotype 1B (strain NCTC 13174 / 8081), this protein is Probable septum site-determining protein MinC.